Consider the following 191-residue polypeptide: Lipid A 1-phosphatase (191 aa).

5 helical membrane passes run 22-42 (LLALSLGLILLGVFIPFPKVP), 60-80 (FIPTILSVAIPLIQRDAVGLF), 117-137 (GNFNMPSGHSSMVGLAVAFLM), 145-162 (YLWLLPLIPLTMLARIYL), and 164-184 (MHTIGAVLAGLGTGMLCVGLF).

The protein belongs to the lipid A LpxE 1-phosphatase family.

The protein localises to the cell inner membrane. It participates in bacterial outer membrane biogenesis; LPS lipid A biosynthesis. Removes the 1-phosphate group from tetra- and probably hexaacylated lipid A species. Absence of the 1-phosphate group renders the bacteria partially resistant to host-derived cationic antimicrobial peptides (CAMP), allowing it to camouflage itself from the host innate immune response, and plays a role in the long-term colonization of the host's stomach. In Helicobacter pylori (strain J99 / ATCC 700824) (Campylobacter pylori J99), this protein is Lipid A 1-phosphatase.